The following is a 129-amino-acid chain: Small ribosomal subunit protein uS11 (129 aa).

It belongs to the universal ribosomal protein uS11 family. As to quaternary structure, part of the 30S ribosomal subunit. Interacts with proteins S7 and S18. Binds to IF-3.

Functionally, located on the platform of the 30S subunit, it bridges several disparate RNA helices of the 16S rRNA. Forms part of the Shine-Dalgarno cleft in the 70S ribosome. The sequence is that of Small ribosomal subunit protein uS11 from Bartonella bacilliformis (strain ATCC 35685 / KC583 / Herrer 020/F12,63).